Here is a 232-residue protein sequence, read N- to C-terminus: Probable metallo-hydrolase M6_Spy0554 (232 aa).

Zn(2+)-binding residues include His75, His77, Asp79, His80, His155, Asp174, and His215.

The cofactor is Zn(2+).

This chain is Probable metallo-hydrolase M6_Spy0554, found in Streptococcus pyogenes serotype M6 (strain ATCC BAA-946 / MGAS10394).